Reading from the N-terminus, the 217-residue chain is 3,4-dihydroxy-2-butanone 4-phosphate synthase (217 aa).

D-ribulose 5-phosphate-binding positions include 37–38 (RE), aspartate 42, 150–154 (RRGHT), and glutamate 174. Glutamate 38 contacts Mg(2+). Histidine 153 provides a ligand contact to Mg(2+).

Belongs to the DHBP synthase family. Homodimer. The cofactor is Mg(2+). Mn(2+) serves as cofactor.

The catalysed reaction is D-ribulose 5-phosphate = (2S)-2-hydroxy-3-oxobutyl phosphate + formate + H(+). It functions in the pathway cofactor biosynthesis; riboflavin biosynthesis; 2-hydroxy-3-oxobutyl phosphate from D-ribulose 5-phosphate: step 1/1. Its function is as follows. Catalyzes the conversion of D-ribulose 5-phosphate to formate and 3,4-dihydroxy-2-butanone 4-phosphate. This is 3,4-dihydroxy-2-butanone 4-phosphate synthase from Pseudoalteromonas translucida (strain TAC 125).